We begin with the raw amino-acid sequence, 182 residues long: Ribosome maturation factor RimM (182 aa).

Positions 103–182 (DGSYYWKDLM…TIEVDWDPGF (80 aa)) constitute a PRC barrel domain.

It belongs to the RimM family. As to quaternary structure, binds ribosomal protein uS19.

The protein resides in the cytoplasm. In terms of biological role, an accessory protein needed during the final step in the assembly of 30S ribosomal subunit, possibly for assembly of the head region. Essential for efficient processing of 16S rRNA. May be needed both before and after RbfA during the maturation of 16S rRNA. It has affinity for free ribosomal 30S subunits but not for 70S ribosomes. The polypeptide is Ribosome maturation factor RimM (Citrobacter koseri (strain ATCC BAA-895 / CDC 4225-83 / SGSC4696)).